We begin with the raw amino-acid sequence, 441 residues long: Methylenetetrahydrofolate--tRNA-(uracil-5-)-methyltransferase TrmFO (441 aa).

11-16 is a binding site for FAD; sequence GAGLAG.

The protein belongs to the MnmG family. TrmFO subfamily. It depends on FAD as a cofactor.

The protein resides in the cytoplasm. It catalyses the reaction uridine(54) in tRNA + (6R)-5,10-methylene-5,6,7,8-tetrahydrofolate + NADH + H(+) = 5-methyluridine(54) in tRNA + (6S)-5,6,7,8-tetrahydrofolate + NAD(+). It carries out the reaction uridine(54) in tRNA + (6R)-5,10-methylene-5,6,7,8-tetrahydrofolate + NADPH + H(+) = 5-methyluridine(54) in tRNA + (6S)-5,6,7,8-tetrahydrofolate + NADP(+). Catalyzes the folate-dependent formation of 5-methyl-uridine at position 54 (M-5-U54) in all tRNAs. This is Methylenetetrahydrofolate--tRNA-(uracil-5-)-methyltransferase TrmFO from Lactiplantibacillus plantarum (strain ATCC BAA-793 / NCIMB 8826 / WCFS1) (Lactobacillus plantarum).